The primary structure comprises 314 residues: MKKIVSLMSALVISVVSFAGISNAADSKKPIVIPTHNWSSQIVMAHVIGGIFESMGNNVKYVNTDSQAVYESIRLGDVSLSHEVWESAFGKSFTTALDKGGLVDWGDHEARTLEDMGYPNWVAEKGLCPGLPDWTALKNPACAKNFTTPDSGGKGRMLEGPQTWHGDLIPQRVDALGLGDLWTVKFAGSADALWAELVAAEKEGRGTIIFNWTPNFTDGAGFTFIDFPPYTAGCRPEDGGDGKCGSPDGYLKKAVNADFPKTHPAAAATFKKMSFSTSHIGAMAALVDVDKMTHEDAAKKWLADNKSVWTPFTK.

An N-terminal signal peptide occupies residues 1-24; it reads MKKIVSLMSALVISVVSFAGISNA. 5 residues coordinate trimethylamine N-oxide: Trp-38, Trp-85, Glu-114, Trp-164, and Trp-212.

As to quaternary structure, the complex is probably composed of two ATP-binding proteins (TmoW), two transmembrane proteins (TmoV) and a solute-binding protein (TmoX).

It is found in the periplasm. In terms of biological role, part of the ABC transporter complex TmoXWV involved in trimethylamine N-oxide (TMAO) import. Possesses a high binding affinity toward TMAO, but presents little binding affinity toward betaine, carnitine, trimethylamine (TMA) or dimethylamine (DMA). The protein is Trimethylamine N-oxide-binding protein of Pelagibacter ubique (strain HTCC1062).